A 138-amino-acid chain; its full sequence is Nanos homolog 2 (138 aa).

The interval 31–55 (ETQEIEEPSPGPPLGQDQGLGAPGA) is disordered. The segment at 62-116 (LCNFCKHNGESRHVYSSHQLKTPDGVVVCPILRHYVCPVCGATGDQAHTLKYCPL) adopts a Nanos-type zinc-finger fold. Positions 63, 66, 79, 90, 98, 101, 109, and 114 each coordinate Zn(2+). 2 consecutive short sequence motifs (C2HC) follow at residues 63–90 (CNFC…VVVC) and 98–114 (CPVC…LKYC).

This sequence belongs to the nanos family. Interacts with CNOT1, CNOT3, CNOT6L, CNOT7 and CNOT9. As to expression, testis and ovary. Expression found in several spermatogenic stages: in cells on the periphery of the tubules which could correspond to spermatogonia, in spermatocytes and in round spermatids (at protein level).

The protein localises to the cytoplasm. Its subcellular location is the P-body. It is found in the perinuclear region. Its function is as follows. Plays a key role in the sexual differentiation of germ cells by promoting the male fate but suppressing the female fate. Represses the female fate pathways by suppressing meiosis, which in turn results in the promotion of the male fate. Maintains the suppression of meiosis by preventing STRA8 expression, which is required for premeiotic DNA replication, after CYP26B1 is decreased. Regulates the localization of the CCR4-NOT deadenylation complex to P-bodies and plays a role in recruiting the complex to trigger the degradation of mRNAs involved in meiosis. Required for the maintenance of the spermatogonial stem cell population. Not essential for the assembly of P-bodies but is required for the maintenance of their normal state. This is Nanos homolog 2 (NANOS2) from Homo sapiens (Human).